A 285-amino-acid chain; its full sequence is Flagellar filament core protein flaB2 (285 aa).

The protein belongs to the bacterial flagellin family. The flagellum consists of an outer layer composed of two sheath proteins, flaA1 (44 kDa) and flaA2 (35 kDa) around a core that contains three proteins flaB1 (37 kDa), flaB2 (34 kDa) and flaB3 (32 kDa).

Its subcellular location is the periplasmic flagellum. It is found in the periplasm. In terms of biological role, component of the core of the flagella. This chain is Flagellar filament core protein flaB2 (flaB2), found in Brachyspira hyodysenteriae (Treponema hyodysenteriae).